A 76-amino-acid polypeptide reads, in one-letter code: Small ribosomal subunit protein bS18 (76 aa).

It belongs to the bacterial ribosomal protein bS18 family. In terms of assembly, part of the 30S ribosomal subunit. Forms a tight heterodimer with protein bS6.

In terms of biological role, binds as a heterodimer with protein bS6 to the central domain of the 16S rRNA, where it helps stabilize the platform of the 30S subunit. The sequence is that of Small ribosomal subunit protein bS18 from Marinomonas sp. (strain MWYL1).